Reading from the N-terminus, the 428-residue chain is Enolase (428 aa).

Q163 contributes to the (2R)-2-phosphoglycerate binding site. Catalysis depends on E205, which acts as the Proton donor. Positions 242, 285, and 312 each coordinate Mg(2+). (2R)-2-phosphoglycerate contacts are provided by K337, R366, S367, and K388. K337 functions as the Proton acceptor in the catalytic mechanism.

It belongs to the enolase family. Mg(2+) serves as cofactor.

It is found in the cytoplasm. The protein resides in the secreted. The protein localises to the cell surface. The catalysed reaction is (2R)-2-phosphoglycerate = phosphoenolpyruvate + H2O. It participates in carbohydrate degradation; glycolysis; pyruvate from D-glyceraldehyde 3-phosphate: step 4/5. Functionally, catalyzes the reversible conversion of 2-phosphoglycerate (2-PG) into phosphoenolpyruvate (PEP). It is essential for the degradation of carbohydrates via glycolysis. The protein is Enolase of Erythrobacter litoralis (strain HTCC2594).